Consider the following 530-residue polypeptide: MRNVIRRVTTMTFTFLLQSPPLPISPSPPQFSLSSSPLSKTQRFITPSQGSRLRTLCTKVIIPNMQDSGSPPLSYLTQREAAEIDETLMGPLGFSIDQLMELAGLSVAASIAEVYKPEEYSRVLAICGPGNNGGDGLVAARHLHHFGYKPFICYPKRTAKPLYTGLVTQLDSLSVPFVSVEDLPDDLSKDFDVIVDAMFGFSFHGAPRPPFDDLIRRLVSLQNYEQTLQKHPVIVSVDIPSGWHVEEGDHEDGGIKPDMLVSLTAPKLCAKRFRGPHHFLGGRFVPPSVAEKYKLELPSYPGTSMCVRIGKPPKVDISAMRVNYVSPELLEEQVETDPTVQFRKWFDEAVAAGLRETNAMALSTANKDKKPSSRMVLLKGFDENGFVWFTNYESKKGSDLSENPSAALLFYWEILNRQVRIEGPVERIPESESENYFHSRPRGSQIGAIVSKQSSVVPGRHVLYDEYEELTKQYSDGSVIPKPKNWGGFRLKPNLFEFWQGQPSRLHDRLQYSLQDVNGNPAWKIHRLAP.

Residues 1 to 64 (MRNVIRRVTT…TLCTKVIIPN (64 aa)) constitute a chloroplast transit peptide. The residue at position 65 (Met65) is an N-acetylmethionine. The region spanning 81-297 (AAEIDETLMG…SVAEKYKLEL (217 aa)) is the YjeF N-terminal domain. Residue 131–135 (NNGGD) participates in (6S)-NADPHX binding. K(+) contacts are provided by Asn132 and Asp196. (6S)-NADPHX-binding positions include 200-206 (GFSFHGA) and Asp238. Residue Ser241 coordinates K(+). Residue 247-250 (EGDH) participates in pyridoxal 5'-phosphate binding. Substrate is bound at residue 321–324 (RVNY). A pyridoxal 5'-phosphate-binding site is contributed by 325 to 327 (VSP). Residue 374-377 (RMVL) coordinates FMN. Lys379 is a pyridoxal 5'-phosphate binding site. Residues 389 to 390 (FT), 395 to 396 (KK), and Gln418 each bind FMN. 3 residues coordinate pyridoxal 5'-phosphate: Tyr436, Arg440, and Ser444. Residues 453–454 (QS) and Trp499 each bind FMN. Residue 505 to 507 (RLH) coordinates pyridoxal 5'-phosphate. Arg509 is an FMN binding site.

It in the N-terminal section; belongs to the NnrE/AIBP family. The protein in the C-terminal section; belongs to the pyridoxamine 5'-phosphate oxidase family. Homodimer. It depends on FMN as a cofactor. The cofactor is K(+). Expressed in leaves, stems, flowers and roots.

Its subcellular location is the plastid. It is found in the chloroplast. It carries out the reaction pyridoxamine 5'-phosphate + O2 + H2O = pyridoxal 5'-phosphate + H2O2 + NH4(+). The catalysed reaction is pyridoxine 5'-phosphate + O2 = pyridoxal 5'-phosphate + H2O2. The enzyme catalyses (6R)-NADHX = (6S)-NADHX. It catalyses the reaction (6R)-NADPHX = (6S)-NADPHX. It functions in the pathway cofactor metabolism; pyridoxal 5'-phosphate salvage; pyridoxal 5'-phosphate from pyridoxamine 5'-phosphate: step 1/1. Its pathway is cofactor metabolism; pyridoxal 5'-phosphate salvage; pyridoxal 5'-phosphate from pyridoxine 5'-phosphate: step 1/1. Catalyzes the oxidation of either pyridoxine 5'-phosphate (PNP) or pyridoxamine 5'-phosphate (PMP) into pyridoxal 5'-phosphate (PLP). Involved in the PLP salvage pathway. Has a higher preference for PNP over PMP. May also catalyze the epimerization of the S- and R-forms of NAD(P)HX, a damaged form of NAD(P)H that is a result of enzymatic or heat-dependent hydration. This is a prerequisite for the S-specific NAD(P)H-hydrate dehydratase to allow the repair of both epimers of NAD(P)HX. This is Pyridoxine/pyridoxamine 5'-phosphate oxidase 1, chloroplastic (PPOX1) from Arabidopsis thaliana (Mouse-ear cress).